A 689-amino-acid polypeptide reads, in one-letter code: Glycine--tRNA ligase beta subunit (689 aa).

The protein belongs to the class-II aminoacyl-tRNA synthetase family. In terms of assembly, tetramer of two alpha and two beta subunits.

The protein localises to the cytoplasm. The enzyme catalyses tRNA(Gly) + glycine + ATP = glycyl-tRNA(Gly) + AMP + diphosphate. This Shigella dysenteriae serotype 1 (strain Sd197) protein is Glycine--tRNA ligase beta subunit.